Reading from the N-terminus, the 600-residue chain is Proton channel OTOP1 (600 aa).

The disordered stretch occupies residues 1 to 50; that stretch reads MPGGPGAPSSPAASSGSSRAAPSGIAACPLSPPPLARGSPQASGPRRGAS. Over 1-56 the chain is Cytoplasmic; it reads MPGGPGAPSSPAASSGSSRAAPSGIAACPLSPPPLARGSPQASGPRRGASVPQKLA. Residues 7 to 27 show a composition bias toward low complexity; sequence APSSPAASSGSSRAAPSGIAA. A helical transmembrane segment spans residues 57–78; the sequence is ETLSSQYGLNVFVAGLLFLLAW. Residues 79 to 86 lie on the Extracellular side of the membrane; it reads AVHATGVG. A helical transmembrane segment spans residues 87 to 110; sequence KSDLLCVLTALMLLQLLWMLWYVG. Topologically, residues 111 to 128 are cytoplasmic; that stretch reads RSYMQRRLIRPKDTHAGA. The helical transmembrane segment at 129–151 threads the bilayer; sequence RWLRGSITLFAFITVVLGCLKVA. The Extracellular portion of the chain corresponds to 152 to 161; the sequence is YFIGFSECLS. A helical transmembrane segment spans residues 162–186; the sequence is ATEGVFPVTHAVHTLLQVYFLWGHA. Topologically, residues 187–194 are cytoplasmic; it reads KDIIMSFK. The helical transmembrane segment at 195–217 threads the bilayer; sequence TLERFGVIHSVFTNLLLWANSVL. At 218–262 the chain is on the extracellular side; sequence NESKHQLNEHKERLITLGFGNITIVLDDHTPQCNCTPPALCSALS. A helical membrane pass occupies residues 263 to 288; the sequence is HGIYYLYPFNIEYQILASTMLYVLWK. Over 289–309 the chain is Cytoplasmic; sequence NIGRRVDSSQHQKMQCRFDGV. Residues 310–332 form a helical membrane-spanning segment; sequence LVGSVLGLTVLAATIAVVVVYMI. The Extracellular portion of the chain corresponds to 333–342; sequence HIGRSKSKSE. Residues 343-368 form a helical membrane-spanning segment; it reads SALIMFYLYAITVLLLMGAAGLVGSW. The Cytoplasmic segment spans residues 369 to 386; that stretch reads IYRVDEKSLDESKNPARK. A helical membrane pass occupies residues 387–411; it reads LDVDLLVATGSGSWLLSWGSILAIA. The Extracellular segment spans residues 412 to 421; it reads CAETRPPYTW. A helical transmembrane segment spans residues 422-442; it reads YNLPYSVLVIVEKYVQNIFII. Topologically, residues 443 to 532 are cytoplasmic; the sequence is ESVHLEPEGV…QGGMKRRLLR (90 aa). Residues 533–551 form a helical membrane-spanning segment; the sequence is NITAFLFLCNISLWIPPAF. The Extracellular portion of the chain corresponds to 552–569; sequence GCRPEYDNGLEEIVFGFE. A helical membrane pass occupies residues 570–593; that stretch reads PWIIVVNLAMPFSIFYRMHAAAAL. The Cytoplasmic segment spans residues 594 to 600; that stretch reads FEVYCKI.

This sequence belongs to the otopetrin family. As to quaternary structure, homodimer. Interacts with STAT1, independently of STAT1 phosphorylation status. In terms of tissue distribution, expressed in thymus, heart, kidney, skin, vestibular system of the inner ear, sour taste cells, heart, uterus, dorsal root ganglion, adrenal gland, lactating mammary gland and stimulated mast cells. In the inner ear, expressed in the supporting cells in extrastriolar regions of the saccule and in the utricle, but not in the cochlea. Expressed in brown adipose tissue. Expressed in epididymal white adipose tissue (eWAT), as well as in inguinal fat, in obese animals, but hardly detectable in eWAT from lean mice. Expressed in acid-sensing taste receptor cells (PKD2L1-positive cells), but not in other types of taste cells (at protein level).

Its subcellular location is the cell membrane. The protein resides in the cell projection. The protein localises to the microvillus. The enzyme catalyses H(+)(in) = H(+)(out). Its activity is regulated as follows. Activated by both acid and alkali, with proton influx in response to extracellular acid and proton efflux during alkali stimulation. Inhibited by Zn(2+); this inhibition is thought to be pH-sensitive. Currents evoked in response to mild acid (pH 6.0) stimulus may also be mildly potentiated by exposure to Zn(2+). Activated by NH(4)Cl. Its function is as follows. Proton-selective ion channel. Biphasically modulated by acid and alkali, mediating proton influx and efflux in response to extracellular acid and base stimulation, respectively. Sour taste receptor, which carries inward currents in response to extracellular acidification. Sensor for ammonium chloride (NH(4)Cl) in taste receptor cells. NH(4)Cl acts by increasing the intracellular pH, thereby generating a driving force for proton entry through OTOP1 channel. Might also participate in alkaline sensation. Plays a role in the regulation of Ca(2+) flux in response to purigenic (ATP, ADP and UDP) stimuli, leading to increase in cytosolic Ca(2+) due to influx of extracellular calcium. May play this role by inhibiting P2Y purinoceptor-mediated Ca(2+) release in a Ca(2+)-dependent manner and promote an influx of Ca(2+) in response to ATP. Through this mechanism and possibly others, plays a role in the formation and function of calcium carbonate-based structures in the vestibular system of the inner ear, called otoconia, that sense gravity and linear acceleration. In obesity, may attenuate adipose tissue inflammation, through the negative regulation of IFNG signaling, hence may play an adaptive role in the maintainance of metabolic homeostasis. Following alkali activation, may also be permeable Na(+), K(+), Cs(+) and Li(+). The chain is Proton channel OTOP1 from Mus musculus (Mouse).